The primary structure comprises 197 residues: Recombination protein RecR (197 aa).

The segment at 57–72 (CSRCGYLTDFDPCLIC) adopts a C4-type zinc-finger fold. One can recognise a Toprim domain in the interval 80-174 (SLICIGEESS…KVTRLAHGLP (95 aa)).

It belongs to the RecR family.

Functionally, may play a role in DNA repair. It seems to be involved in an RecBC-independent recombinational process of DNA repair. It may act with RecF and RecO. In Syntrophomonas wolfei subsp. wolfei (strain DSM 2245B / Goettingen), this protein is Recombination protein RecR.